We begin with the raw amino-acid sequence, 76 residues long: Kappa-actitoxin-Avd4l (76 aa).

Positions 1-19 (MNKALFLCLVVLCAAVVFA) are cleaved as a signal peptide. A propeptide spanning residues 20–31 (AEDLQKAKHAPF) is cleaved from the precursor. Disulfide bonds link Cys-37–Cys-72, Cys-39–Cys-65, and Cys-55–Cys-73.

Belongs to the sea anemone type 3 (BDS) potassium channel toxin family. As to expression, weakly expressed in the ectodermal tissue from the distal and proximal tentacles, body wall, and oral disk.

It is found in the secreted. The protein localises to the nematocyst. Its function is as follows. Blocks Kv3 voltage-gated potassium channels. Reduces blood pressure. This is Kappa-actitoxin-Avd4l from Anemonia viridis (Snakelocks anemone).